The sequence spans 613 residues: Dihydroxy-acid dehydratase (613 aa).

Residue D81 participates in Mg(2+) binding. A [2Fe-2S] cluster-binding site is contributed by C122. Positions 123 and 124 each coordinate Mg(2+). K124 carries the N6-carboxylysine modification. C193 is a [2Fe-2S] cluster binding site. E489 lines the Mg(2+) pocket. Catalysis depends on S515, which acts as the Proton acceptor.

The protein belongs to the IlvD/Edd family. Homodimer. [2Fe-2S] cluster serves as cofactor. Mg(2+) is required as a cofactor.

The catalysed reaction is (2R)-2,3-dihydroxy-3-methylbutanoate = 3-methyl-2-oxobutanoate + H2O. The enzyme catalyses (2R,3R)-2,3-dihydroxy-3-methylpentanoate = (S)-3-methyl-2-oxopentanoate + H2O. It functions in the pathway amino-acid biosynthesis; L-isoleucine biosynthesis; L-isoleucine from 2-oxobutanoate: step 3/4. It participates in amino-acid biosynthesis; L-valine biosynthesis; L-valine from pyruvate: step 3/4. Functions in the biosynthesis of branched-chain amino acids. Catalyzes the dehydration of (2R,3R)-2,3-dihydroxy-3-methylpentanoate (2,3-dihydroxy-3-methylvalerate) into 2-oxo-3-methylpentanoate (2-oxo-3-methylvalerate) and of (2R)-2,3-dihydroxy-3-methylbutanoate (2,3-dihydroxyisovalerate) into 2-oxo-3-methylbutanoate (2-oxoisovalerate), the penultimate precursor to L-isoleucine and L-valine, respectively. This is Dihydroxy-acid dehydratase from Pseudomonas putida (strain GB-1).